Reading from the N-terminus, the 433-residue chain is Deoxyguanosinetriphosphate triphosphohydrolase-like protein 2 (433 aa).

Residues 61 to 248 form the HD domain; that stretch reads RLTHSLEVAQ…METADDIAYT (188 aa).

This sequence belongs to the dGTPase family. Type 2 subfamily.

This chain is Deoxyguanosinetriphosphate triphosphohydrolase-like protein 2, found in Deinococcus radiodurans (strain ATCC 13939 / DSM 20539 / JCM 16871 / CCUG 27074 / LMG 4051 / NBRC 15346 / NCIMB 9279 / VKM B-1422 / R1).